The chain runs to 118 residues: Small ribosomal subunit protein uS13 (118 aa).

The tract at residues serine 94–lysine 118 is disordered.

The protein belongs to the universal ribosomal protein uS13 family. As to quaternary structure, part of the 30S ribosomal subunit. Forms a loose heterodimer with protein S19. Forms two bridges to the 50S subunit in the 70S ribosome.

Its function is as follows. Located at the top of the head of the 30S subunit, it contacts several helices of the 16S rRNA. In the 70S ribosome it contacts the 23S rRNA (bridge B1a) and protein L5 of the 50S subunit (bridge B1b), connecting the 2 subunits; these bridges are implicated in subunit movement. Contacts the tRNAs in the A and P-sites. The chain is Small ribosomal subunit protein uS13 from Shewanella violacea (strain JCM 10179 / CIP 106290 / LMG 19151 / DSS12).